Reading from the N-terminus, the 287-residue chain is Putative B3 domain-containing protein Os08g0157700 (287 aa).

The span at 17-29 (ATEEEEEEEEEEQ) shows a compositional bias: acidic residues. The disordered stretch occupies residues 17 to 36 (ATEEEEEEEEEEQALGQEPA). A DNA-binding region (TF-B3) is located at residues 71–168 (FDKVVTPSDV…RYFIDYRHCH (98 aa)).

It localises to the nucleus. This chain is Putative B3 domain-containing protein Os08g0157700, found in Oryza sativa subsp. japonica (Rice).